The sequence spans 441 residues: E3 ubiquitin-protein ligase APD1 (441 aa).

Helical transmembrane passes span 60–80 (SNLY…FILI) and 305–325 (IAYV…IQFC). An RING-type zinc finger spans residues 390–429 (CAICFDVPRDCFFLPCGHSVSCYECGTTMQEADGSCPICR).

As to expression, expressed in the shoot apical meristems (SAM), root tips and inflorescences, and, at low levels, in floral buds and pollen.

It is found in the endomembrane system. The protein resides in the vacuole membrane. It catalyses the reaction S-ubiquitinyl-[E2 ubiquitin-conjugating enzyme]-L-cysteine + [acceptor protein]-L-lysine = [E2 ubiquitin-conjugating enzyme]-L-cysteine + N(6)-ubiquitinyl-[acceptor protein]-L-lysine.. The protein operates within protein modification; protein ubiquitination. Its function is as follows. Involved in pollen mitosis II (PMII) regulation during male gametogenesis. This chain is E3 ubiquitin-protein ligase APD1, found in Arabidopsis thaliana (Mouse-ear cress).